Here is a 238-residue protein sequence, read N- to C-terminus: Orotate phosphoribosyltransferase (238 aa).

Lysine 29 lines the 5-phospho-alpha-D-ribose 1-diphosphate pocket. Orotate is bound at residue 37 to 38 (FF). Residues 87 to 88 (YK), arginine 118, lysine 119, lysine 122, histidine 124, and 144 to 152 (DDVITAGTA) each bind 5-phospho-alpha-D-ribose 1-diphosphate. Threonine 148 and arginine 176 together coordinate orotate.

This sequence belongs to the purine/pyrimidine phosphoribosyltransferase family. PyrE subfamily. In terms of assembly, homodimer.

The enzyme catalyses orotidine 5'-phosphate + diphosphate = orotate + 5-phospho-alpha-D-ribose 1-diphosphate. It participates in pyrimidine metabolism; UMP biosynthesis via de novo pathway; UMP from orotate: step 1/2. Functionally, catalyzes the transfer of a ribosyl phosphate group from 5-phosphoribose 1-diphosphate to orotate, leading to the formation of orotidine monophosphate (OMP). In Coccidioides immitis (strain RS) (Valley fever fungus), this protein is Orotate phosphoribosyltransferase (URA5).